A 319-amino-acid polypeptide reads, in one-letter code: Oxaloacetate tautomerase fahd2, mitochondrial (319 aa).

A mitochondrion-targeting transit peptide spans 1-31 (MLTQTRVALRVLKNAHLTLPKRNISQSPALS). Residues Glu164, Glu166, and Asp195 each coordinate Mg(2+).

It belongs to the FAH family. It depends on Mg(2+) as a cofactor. Mn(2+) is required as a cofactor.

The protein resides in the mitochondrion. It catalyses the reaction oxaloacetate = enol-oxaloacetate. In terms of biological role, tautomerase that converts enol-oxaloacetate, a strong inhibitor of succinate dehydrogenase, to the physiological keto form of oxaloacetate. It is thereby required to maximize aerobic respiration efficiency by preventing succinate dehydrogenase inhibition. This chain is Oxaloacetate tautomerase fahd2, mitochondrial (fahd2), found in Xenopus laevis (African clawed frog).